The following is a 560-amino-acid chain: Chaperonin GroEL 2 (560 aa).

Residues 29 to 32 (TLGP), lysine 50, 86 to 90 (DGTTT), glycine 414, and aspartate 494 contribute to the ATP site. The tract at residues 524 to 546 (EDEDDDDGGGGGGGGMPAGGAGG) is disordered. The segment covering 532-546 (GGGGGGGMPAGGAGG) has biased composition (gly residues).

The protein belongs to the chaperonin (HSP60) family. In terms of assembly, forms a cylinder of 14 subunits composed of two heptameric rings stacked back-to-back. Interacts with the co-chaperonin GroES.

The protein localises to the cytoplasm. It catalyses the reaction ATP + H2O + a folded polypeptide = ADP + phosphate + an unfolded polypeptide.. Together with its co-chaperonin GroES, plays an essential role in assisting protein folding. The GroEL-GroES system forms a nano-cage that allows encapsulation of the non-native substrate proteins and provides a physical environment optimized to promote and accelerate protein folding. This chain is Chaperonin GroEL 2, found in Salinibacter ruber (strain DSM 13855 / M31).